The chain runs to 151 residues: Large ribosomal subunit protein bL9 (151 aa).

The protein belongs to the bacterial ribosomal protein bL9 family.

Functionally, binds to the 23S rRNA. The chain is Large ribosomal subunit protein bL9 from Francisella tularensis subsp. tularensis (strain FSC 198).